The following is a 114-amino-acid chain: SNF1-related protein kinase regulatory subunit beta-3 (114 aa).

Residues 26–50 (SYNNVYSSTEDETRDPPAVPPHLQH) form a disordered region. The association with SNF1 complex (ASC) stretch occupies residues 40–114 (DPPAVPPHLQ…PVQRRGSANV (75 aa)).

This sequence belongs to the 5'-AMP-activated protein kinase beta subunit family. Subunit of a probable heterotrimeric complex consisting of an alpha catalytic (KIN10 or KIN11) subunit, and a beta (KINB) and a gamma (KING or SNF4) non-catalytic regulatory subunits. Interacts with KIN10, KIN11 and SNF4. Interacts with FLZ1, FLZ2, FLZ3, FLZ4, FLZ5, FLZ7, FLZ8, FLZ10, FLZ13, FLZ14, FLZ15 and FLZ16. In terms of tissue distribution, expressed in rosette (at the protein level). Expressed in the whole plant and at the different developmental stage with a higher level in stems.

In terms of biological role, regulatory subunit of the probable trimeric SNF1-related protein kinase (SnRK) complex, which may play a role in a signal transduction cascade regulating gene expression and carbohydrate metabolism in higher plants. The chain is SNF1-related protein kinase regulatory subunit beta-3 (KINB3) from Arabidopsis thaliana (Mouse-ear cress).